Here is a 204-residue protein sequence, read N- to C-terminus: Putative uracil phosphoribosyltransferase urg2 (204 aa).

Residues R75, R100, and 126 to 134 (DPVMATGGT) contribute to the 5-phospho-alpha-D-ribose 1-diphosphate site. Residue Y187 coordinates D-ribose 5-phosphate. Residues L188 and 193 to 195 (GDI) contribute to the uracil site. D194 provides a ligand contact to 5-phospho-alpha-D-ribose 1-diphosphate.

Belongs to the UPRTase family. It depends on Mg(2+) as a cofactor.

The protein localises to the cytoplasm. It is found in the nucleus. It carries out the reaction UMP + diphosphate = 5-phospho-alpha-D-ribose 1-diphosphate + uracil. It functions in the pathway pyrimidine metabolism; UMP biosynthesis via salvage pathway; UMP from uracil: step 1/1. Allosterically activated by GTP. In terms of biological role, catalyzes the conversion of uracil and 5-phospho-alpha-D-ribose 1-diphosphate (PRPP) to UMP and diphosphate. This chain is Putative uracil phosphoribosyltransferase urg2, found in Schizosaccharomyces pombe (strain 972 / ATCC 24843) (Fission yeast).